A 119-amino-acid chain; its full sequence is Holo-[acyl-carrier-protein] synthase (119 aa).

Mg(2+) contacts are provided by aspartate 8 and glutamate 59.

This sequence belongs to the P-Pant transferase superfamily. AcpS family. Mg(2+) is required as a cofactor.

It is found in the cytoplasm. It catalyses the reaction apo-[ACP] + CoA = holo-[ACP] + adenosine 3',5'-bisphosphate + H(+). In terms of biological role, transfers the 4'-phosphopantetheine moiety from coenzyme A to a Ser of acyl-carrier-protein. The sequence is that of Holo-[acyl-carrier-protein] synthase from Streptococcus agalactiae serotype Ia (strain ATCC 27591 / A909 / CDC SS700).